The primary structure comprises 428 residues: 2-isopropylmalate synthase 2 (428 aa).

The region spanning 40–302 (PFFMDVTLRD…EVPLNFSTIY (263 aa)) is the Pyruvate carboxyltransferase domain. Mn(2+) contacts are provided by D49, H241, H243, and N277.

The protein belongs to the alpha-IPM synthase/homocitrate synthase family. LeuA type 1 subfamily. As to quaternary structure, homodimer. The cofactor is Mn(2+).

The protein localises to the cytoplasm. The enzyme catalyses 3-methyl-2-oxobutanoate + acetyl-CoA + H2O = (2S)-2-isopropylmalate + CoA + H(+). The protein operates within amino-acid biosynthesis; L-leucine biosynthesis; L-leucine from 3-methyl-2-oxobutanoate: step 1/4. In terms of biological role, catalyzes the condensation of the acetyl group of acetyl-CoA with 3-methyl-2-oxobutanoate (2-ketoisovalerate) to form 3-carboxy-3-hydroxy-4-methylpentanoate (2-isopropylmalate). Has high alpha-isopropylmalate synthase activity and low citramalate synthase activity. In Leptospira interrogans serogroup Icterohaemorrhagiae serovar Lai (strain 56601), this protein is 2-isopropylmalate synthase 2.